A 761-amino-acid chain; its full sequence is Mitochondrial inner membrane m-AAA protease component YTA10 (761 aa).

Topologically, residues 1–115 are mitochondrial matrix; that stretch reads MMMWQRYARG…SLSEYFRSKE (115 aa). Residues 67 to 101 are disordered; it reads SWTRLNENRPNKEGEGKNNGNKDNNSNKEDGKDKR. Composition is skewed to basic and acidic residues over residues 72-82 and 91-101; these read NENRPNKEGEG and NSNKEDGKDKR. A helical membrane pass occupies residues 116 to 136; it reads FANTMFLTIGFTIIFTLLTPS. Residues 137–223 lie on the Mitochondrial intermembrane side of the membrane; it reads SNNSGDDSNR…IPIKYIERSS (87 aa). Residues 224 to 244 traverse the membrane as a helical segment; that stretch reads PFTFLFPFLPTIILLGGLYFI. Over 245-761 the chain is Mitochondrial matrix; that stretch reads TRKINSSPPN…EPPEAPAATN (517 aa). ATP contacts are provided by V290, A291, T332, G333, K334, T335, L336, and H472. H558 is a binding site for Zn(2+). Residue E559 is part of the active site. Residues H562 and D634 each coordinate Zn(2+).

It in the N-terminal section; belongs to the AAA ATPase family. This sequence in the C-terminal section; belongs to the peptidase M41 family. Component of the 850 kDa m-AAA protease complex, a heterohexamer composed of YTA12/RCA1 and YTA10/AFG3. Associates with the prohibitin complex, composed of PHB1 and PHB2, inhibiting the activity of the m-AAA protease complex. Zn(2+) serves as cofactor.

The protein resides in the mitochondrion inner membrane. It catalyses the reaction ATP + H2O = ADP + phosphate + H(+). ATP hydrolysis is coordinated within m-AAA protease ring complexes: ATP-binding to YTA10/AFG3 inhibits ATP hydrolysis by the neighboring subunit YTA12/RCA1, leading to coordinated ATP hydrolysis within the AAA ATPase ring. In terms of biological role, catalytic component of the m-AAA protease, a protease that plays a key role in proteostasis of inner mitochondrial membrane proteins. YTA10/AFG3 possesses both ATPase and protease activities: the ATPase activity is required to unfold substrates, threading them into the internal proteolytic cavity for hydrolysis into small peptide fragments. The complex is necessary for the assembly of mitochondrial respiratory chain and ATPase complexes. The m-AAA protease carries out protein quality control in the inner membrane of the mitochondria by mediating degradation of mistranslated or misfolded polypeptides. It also mediates protein maturation of the mitochondrial ribosomal subunit MRPL32/bL32m by catalyzing the cleavage of the presequence of MRPL32/bL32m prior to assembly into the mitochondrial ribosome. Promotes maturation of cytochrome c peroxidase (CCP1) by acting as a membrane protein dislocase via its ATPase activity: pulls the CCP1 transmembrane to the matrix prior to processing by the rhomboid protease PCP1. The membrane protein dislocase activity is also required to dislocate moderately hydrophobic transmembrane segments from the membrane. This Saccharomyces cerevisiae (strain ATCC 204508 / S288c) (Baker's yeast) protein is Mitochondrial inner membrane m-AAA protease component YTA10.